The primary structure comprises 488 residues: Germacrene A hydroxylase (488 aa).

Residues 1–6 (MELSIT) are Cytoplasmic-facing. The helical; Signal-anchor for type II membrane protein transmembrane segment at 7–23 (TSIALATIVFFLYKLAT) threads the bilayer. Over 24-488 (RPKSTKKQLP…KTELLLVPSF (465 aa)) the chain is Lumenal. Residues N169, N260, and N379 are each glycosylated (N-linked (GlcNAc...) asparagine). C432 lines the heme pocket.

Belongs to the cytochrome P450 family. Heme serves as cofactor.

Its subcellular location is the endoplasmic reticulum membrane. The catalysed reaction is (+)-(R)-germacrene A + 3 reduced [NADPH--hemoprotein reductase] + 3 O2 = germacra-1(10),4,11(13)-trien-12-oate + 3 oxidized [NADPH--hemoprotein reductase] + 4 H2O + 4 H(+). The protein operates within secondary metabolite biosynthesis; terpenoid biosynthesis. Involved in the biosynthesis of germacrene-derived sesquiterpene lactones. Catalyzes three consecutive oxidations of germacrene A to produce germacrene A acid. Could also catalyze the three-step oxidation of non-natural substrate amorphadiene to artemisinic acid. The chain is Germacrene A hydroxylase from Lactuca sativa (Garden lettuce).